We begin with the raw amino-acid sequence, 230 residues long: Prepilin leader peptidase/N-methyltransferase (230 aa).

The next 7 membrane-spanning stretches (helical) occupy residues 1-21 (MIYF…WFYL), 60-80 (GHIL…QIAF), 84-104 (IFTV…YLDW), 114-134 (CLWL…LLTL), 140-160 (SAAS…FYYG), 181-201 (LETL…FSLI), and 208-228 (FLPF…VKYY).

Belongs to the peptidase A24 family.

The protein resides in the cell inner membrane. It carries out the reaction Typically cleaves a -Gly-|-Phe- bond to release an N-terminal, basic peptide of 5-8 residues from type IV prepilin, and then N-methylates the new N-terminal amino group, the methyl donor being S-adenosyl-L-methionine.. In terms of biological role, plays a role in type II pseudopili formation by proteolytically removing the leader sequence from substrate proteins and subsequently monomethylating the alpha-amino group of the newly exposed N-terminal phenylalanine. Substrates include proteins required for biogenesis of the type II general secretory apparatus. The chain is Prepilin leader peptidase/N-methyltransferase (hofD) from Haemophilus influenzae (strain ATCC 51907 / DSM 11121 / KW20 / Rd).